The primary structure comprises 304 residues: Glutaminase (304 aa).

Residues Ser-63, Asn-114, Glu-158, Asn-165, Tyr-189, Tyr-240, and Val-258 each coordinate substrate.

The protein belongs to the glutaminase family. As to quaternary structure, homotetramer.

It carries out the reaction L-glutamine + H2O = L-glutamate + NH4(+). This chain is Glutaminase, found in Shewanella baltica (strain OS155 / ATCC BAA-1091).